We begin with the raw amino-acid sequence, 214 residues long: 2-phospho-L-lactate guanylyltransferase (214 aa).

This sequence belongs to the CofC family. In terms of assembly, homodimer.

The catalysed reaction is (2S)-2-phospholactate + GTP + H(+) = (2S)-lactyl-2-diphospho-5'-guanosine + diphosphate. It participates in cofactor biosynthesis; coenzyme F420 biosynthesis. Its function is as follows. Guanylyltransferase that catalyzes the activation of (2S)-2-phospholactate (2-PL) as (2S)-lactyl-2-diphospho-5'-guanosine, via the condensation of 2-PL with GTP. It is involved in the biosynthesis of coenzyme F420, a hydride carrier cofactor. The chain is 2-phospho-L-lactate guanylyltransferase from Methanoregula boonei (strain DSM 21154 / JCM 14090 / 6A8).